Consider the following 395-residue polypeptide: Xylose isomerase (395 aa).

Catalysis depends on residues histidine 54 and aspartate 57. Positions 181, 217, 220, 245, 255, 257, and 293 each coordinate Mg(2+).

The protein belongs to the xylose isomerase family. In terms of assembly, homotetramer. Mg(2+) is required as a cofactor.

The protein localises to the cytoplasm. It carries out the reaction alpha-D-xylose = alpha-D-xylulofuranose. This Pseudarthrobacter chlorophenolicus (strain ATCC 700700 / DSM 12829 / CIP 107037 / JCM 12360 / KCTC 9906 / NCIMB 13794 / A6) (Arthrobacter chlorophenolicus) protein is Xylose isomerase.